The primary structure comprises 225 residues: Putative elongation factor 1 gamma homolog (225 aa).

In terms of domain architecture, GST C-terminal spans 94–225 (DFKTRADILR…MCETEMQPIK (132 aa)).

This Saccharomyces cerevisiae (strain ATCC 204508 / S288c) (Baker's yeast) protein is Putative elongation factor 1 gamma homolog.